A 1126-amino-acid polypeptide reads, in one-letter code: Translation initiation factor IF-2 (1126 aa).

Residues 63 to 519 (LSINKPSIKK…TTRQRQKRRA (457 aa)) are disordered. The span at 70 to 83 (IKKDNFKQNKEDKS) shows a compositional bias: basic and acidic residues. The segment covering 93 to 111 (PLKNNSNKKPLLIKPLNKP) has biased composition (low complexity). The segment covering 116-151 (KISNQLQNPNKPNIVNSSQSRANLTNTNSKPSQNFN) has biased composition (polar residues). Over residues 161–171 (TPPPIKSPAKP) the composition is skewed to pro residues. Residues 181–195 (NINNNVKSSESSQNI) show a composition bias toward polar residues. Low complexity-rich tracts occupy residues 211 to 224 (NTNKPKTKNFNNRK) and 240 to 252 (IINPNKQNNNKQN). Over residues 254-264 (AFKQTASNRPG) the composition is skewed to polar residues. 2 stretches are compositionally biased toward low complexity: residues 291-315 (NRQGNPNRPGSPNRPGMPNRPGLRN) and 327-349 (NRQGNPNRPGSPNGPGMPNNRPG). Residues 429–443 (GKTDWDDSAKLEALR) are compositionally biased toward basic and acidic residues. Positions 501–517 (KQFKKKKKETTRQRQKR) are enriched in basic residues. Residues 618-790 (RRPPVITVMG…ILLVSDVEDL (173 aa)) enclose the tr-type G domain. A G1 region spans residues 627–634 (GHVDHGKT). 627–634 (GHVDHGKT) lines the GTP pocket. The segment at 652-656 (GITQH) is G2. A G3 region spans residues 677 to 680 (DTPG). GTP-binding positions include 677–681 (DTPGH) and 731–734 (NKID). Residues 731-734 (NKID) form a G4 region. Positions 767-769 (SAI) are G5.

This sequence belongs to the TRAFAC class translation factor GTPase superfamily. Classic translation factor GTPase family. IF-2 subfamily.

The protein localises to the cytoplasm. Its function is as follows. One of the essential components for the initiation of protein synthesis. Protects formylmethionyl-tRNA from spontaneous hydrolysis and promotes its binding to the 30S ribosomal subunits. Also involved in the hydrolysis of GTP during the formation of the 70S ribosomal complex. This is Translation initiation factor IF-2 from Prochlorococcus marinus (strain AS9601).